The chain runs to 126 residues: Fluoride-specific ion channel FluC (126 aa).

A run of 4 helical transmembrane segments spans residues 4-24 (SLLSIACGAVLGAWLRWFVGL), 35-55 (LGTILVNLVGGFIIGFAIALF), 67-87 (FVITGFCGALTTFSTFSAEVI), and 97-117 (FAIALITIHLMGSLLCTVLGL). Residues G74 and T77 each contribute to the Na(+) site.

The protein belongs to the fluoride channel Fluc/FEX (TC 1.A.43) family.

It localises to the cell inner membrane. It carries out the reaction fluoride(in) = fluoride(out). Its activity is regulated as follows. Na(+) is not transported, but it plays an essential structural role and its presence is essential for fluoride channel function. Functionally, fluoride-specific ion channel. Important for reducing fluoride concentration in the cell, thus reducing its toxicity. This chain is Fluoride-specific ion channel FluC, found in Acinetobacter baylyi (strain ATCC 33305 / BD413 / ADP1).